Here is a 271-residue protein sequence, read N- to C-terminus: 4-hydroxy-tetrahydrodipicolinate reductase (271 aa).

NAD(+)-binding positions include 11–16 and glutamate 37; that span reads GGSGRM. Arginine 38 serves as a coordination point for NADP(+). NAD(+) is bound by residues 101-103 and 125-128; these read GTT and APNM. The active-site Proton donor/acceptor is the histidine 158. Histidine 159 lines the (S)-2,3,4,5-tetrahydrodipicolinate pocket. Residue lysine 162 is the Proton donor of the active site. A (S)-2,3,4,5-tetrahydrodipicolinate-binding site is contributed by 168–169; the sequence is GT.

This sequence belongs to the DapB family.

It is found in the cytoplasm. The enzyme catalyses (S)-2,3,4,5-tetrahydrodipicolinate + NAD(+) + H2O = (2S,4S)-4-hydroxy-2,3,4,5-tetrahydrodipicolinate + NADH + H(+). It carries out the reaction (S)-2,3,4,5-tetrahydrodipicolinate + NADP(+) + H2O = (2S,4S)-4-hydroxy-2,3,4,5-tetrahydrodipicolinate + NADPH + H(+). It participates in amino-acid biosynthesis; L-lysine biosynthesis via DAP pathway; (S)-tetrahydrodipicolinate from L-aspartate: step 4/4. Catalyzes the conversion of 4-hydroxy-tetrahydrodipicolinate (HTPA) to tetrahydrodipicolinate. This Shewanella piezotolerans (strain WP3 / JCM 13877) protein is 4-hydroxy-tetrahydrodipicolinate reductase.